A 514-amino-acid polypeptide reads, in one-letter code: 2,3-bisphosphoglycerate-independent phosphoglycerate mutase (514 aa).

Residues Asp-14 and Ser-64 each contribute to the Mn(2+) site. Catalysis depends on Ser-64, which acts as the Phosphoserine intermediate. Substrate contacts are provided by residues His-125, 155-156 (RD), Arg-187, Arg-193, 263-266 (RADR), and Lys-336. Positions 403, 407, 444, 445, and 463 each coordinate Mn(2+).

It belongs to the BPG-independent phosphoglycerate mutase family. Monomer. It depends on Mn(2+) as a cofactor.

It carries out the reaction (2R)-2-phosphoglycerate = (2R)-3-phosphoglycerate. It functions in the pathway carbohydrate degradation; glycolysis; pyruvate from D-glyceraldehyde 3-phosphate: step 3/5. In terms of biological role, catalyzes the interconversion of 2-phosphoglycerate and 3-phosphoglycerate. The chain is 2,3-bisphosphoglycerate-independent phosphoglycerate mutase from Shewanella sp. (strain ANA-3).